Consider the following 205-residue polypeptide: Large ribosomal subunit protein uL4 (205 aa).

Positions 43-95 (RSGNRAQKDRAEVKHSTKKPWRQKGTGRARAGMTSSPLWRGGGRAFPNSPEEN) are disordered. The span at 48 to 57 (AQKDRAEVKH) shows a compositional bias: basic and acidic residues. Over residues 58-69 (STKKPWRQKGTG) the composition is skewed to basic residues.

It belongs to the universal ribosomal protein uL4 family. Part of the 50S ribosomal subunit.

Its function is as follows. One of the primary rRNA binding proteins, this protein initially binds near the 5'-end of the 23S rRNA. It is important during the early stages of 50S assembly. It makes multiple contacts with different domains of the 23S rRNA in the assembled 50S subunit and ribosome. In terms of biological role, forms part of the polypeptide exit tunnel. The chain is Large ribosomal subunit protein uL4 from Bordetella bronchiseptica (strain ATCC BAA-588 / NCTC 13252 / RB50) (Alcaligenes bronchisepticus).